Consider the following 136-residue polypeptide: MTDPIATSSTAAKELLDMDGRASEQRLIQLRIRQQQERAVKELRDAIGIHQCKKGIFCLVKQSKISYEITATDHRLSYELGPQRQKFTCMVGINPIVITQQSGDTKGCIQCSCDSTECIYTLLKTLCGLRDLLPMN.

Belongs to the adenoviridae E3_15 family.

Its function is as follows. Protects virus-infected cells from TNF-induced cytolysis. In Human adenovirus B serotype 3 (HAdV-3), this protein is Early E3 15.3 kDa protein.